The primary structure comprises 380 residues: Ankyrin repeat domain-containing protein 63 (380 aa).

ANK repeat units follow at residues 11–40 (AGTR…RSII), 46–79 (QGRT…AVNL), 83–112 (RGRT…DPEA), 116–145 (AGNS…RLGL), and 153–182 (AGLT…RAAA). Low complexity-rich tracts occupy residues 181 to 203 (AAAA…PAAS) and 216 to 226 (RPLLARFARAA). A disordered region spans residues 181–256 (AAAAAARGSN…GSERPELGRS (76 aa)). Residue S193 is modified to Phosphoserine. Position 294 is a phosphoserine (S294). The tract at residues 309–368 (PIGLSPHPEGGPGSGRLGLRRRSTAPDIPSLVGEAPGPESGPELEANALSVSVPGPNPWQ) is disordered.

This Homo sapiens (Human) protein is Ankyrin repeat domain-containing protein 63.